A 288-amino-acid polypeptide reads, in one-letter code: MENNLAPINEDPFPIKIGIIGDADLDTTISLQDRMEYAVCTPFGKPSDIIIEGLIDGVKCALLCRNGRLHDIMPTNINYRANIWAMRKLGCTHILVTHSLSSLREDIMPGDFVVPNDLIDHTTRRAQTFYDGALGSPFGVCHLPMYPAFCERTRQHLLNAAQELDLATHSKATVLTLEGPRYSTLAENNIYRKWGADLLSMTLSPEATLAKEAGILYASIGLVTNIECWCANQPIATTHEIIYVFKNKVEKLQQVLSKAIANISKEDWSEDILKAKILVCSNFANRNK.

Position 65-66 (65-66 (RN)) interacts with phosphate. Met201 is a binding site for substrate. Phosphate is bound at residue Thr202.

This sequence belongs to the PNP/MTAP phosphorylase family. MTAP subfamily. In terms of assembly, homotrimer.

It is found in the cytoplasm. Its subcellular location is the nucleus. The enzyme catalyses a purine D-ribonucleoside + phosphate = a purine nucleobase + alpha-D-ribose 1-phosphate. The protein operates within purine metabolism; purine nucleoside salvage. Its function is as follows. Purine nucleoside phosphorylase involved in purine salvage. In Drosophila pseudoobscura pseudoobscura (Fruit fly), this protein is Purine nucleoside phosphorylase.